Here is a 325-residue protein sequence, read N- to C-terminus: Structure-specific endonuclease subunit SLX1 (325 aa).

The GIY-YIG domain occupies 10 to 92 (ALYTVYILRS…NNPHLSMHIP (83 aa)). The segment at 230-284 (CVVCREEMKSGEGLHAVCTHEGCDGVGHISCWSRSFLKNNDTGSILPVQGQCPMC) adopts an SLX1-type zinc-finger fold.

The protein belongs to the SLX1 family. As to quaternary structure, forms a heterodimer with SLX4. The cofactor is a divalent metal cation.

Its subcellular location is the nucleus. In terms of biological role, catalytic subunit of the SLX1-SLX4 structure-specific endonuclease that resolves DNA secondary structures generated during DNA repair and recombination. Has endonuclease activity towards branched DNA substrates, introducing single-strand cuts in duplex DNA close to junctions with ss-DNA. In Chaetomium globosum (strain ATCC 6205 / CBS 148.51 / DSM 1962 / NBRC 6347 / NRRL 1970) (Soil fungus), this protein is Structure-specific endonuclease subunit SLX1.